The chain runs to 300 residues: Glutamyl-Q tRNA(Asp) synthetase (300 aa).

Residues 14-18 (RFAPT) and Glu-50 contribute to the L-glutamate site. The 'HIGH' region signature appears at 17–27 (PTPSGFLHFGS). Zn(2+) is bound by residues Cys-106, Cys-108, Tyr-120, and Cys-124. Tyr-177 and Arg-195 together coordinate L-glutamate. Residues 233 to 237 (KLGKS) carry the 'KMSKS' region motif. Residue Lys-236 participates in ATP binding.

It belongs to the class-I aminoacyl-tRNA synthetase family. GluQ subfamily. Zn(2+) is required as a cofactor.

Functionally, catalyzes the tRNA-independent activation of glutamate in presence of ATP and the subsequent transfer of glutamate onto a tRNA(Asp). Glutamate is transferred on the 2-amino-5-(4,5-dihydroxy-2-cyclopenten-1-yl) moiety of the queuosine in the wobble position of the QUC anticodon. This chain is Glutamyl-Q tRNA(Asp) synthetase, found in Pseudomonas putida (strain ATCC 47054 / DSM 6125 / CFBP 8728 / NCIMB 11950 / KT2440).